The sequence spans 324 residues: tRNA dimethylallyltransferase (324 aa).

Gly-17–Thr-24 lines the ATP pocket. Thr-19 to Thr-24 contributes to the substrate binding site. Interaction with substrate tRNA regions lie at residues Asp-42–Leu-45, Gln-166–Arg-170, and Arg-251–Arg-256.

The protein belongs to the IPP transferase family. Monomer. It depends on Mg(2+) as a cofactor.

The catalysed reaction is adenosine(37) in tRNA + dimethylallyl diphosphate = N(6)-dimethylallyladenosine(37) in tRNA + diphosphate. Its function is as follows. Catalyzes the transfer of a dimethylallyl group onto the adenine at position 37 in tRNAs that read codons beginning with uridine, leading to the formation of N6-(dimethylallyl)adenosine (i(6)A). In Burkholderia mallei (strain NCTC 10247), this protein is tRNA dimethylallyltransferase.